We begin with the raw amino-acid sequence, 220 residues long: Ubiquitin-like-conjugating enzyme ATG10 (220 aa).

Cys-166 functions as the Glycyl thioester intermediate in the catalytic mechanism.

This sequence belongs to the ATG10 family. In terms of assembly, interacts with MAP1LC3A. By interacting with MAP1LC3A, it plays a role in the conjugation of ATG12 to ATG5. Also able to directly interact either with ATG5 or ATG7. Interacts with IRGM.

It is found in the cytoplasm. E2-like enzyme involved in autophagy. Acts as an E2-like enzyme that catalyzes the conjugation of ATG12 to ATG5. ATG12 conjugation to ATG5 is required for autophagy. Likely serves as an ATG5-recognition molecule. Not involved in ATG12 conjugation to ATG3. Plays a role in adenovirus-mediated cell lysis. The sequence is that of Ubiquitin-like-conjugating enzyme ATG10 (ATG10) from Homo sapiens (Human).